We begin with the raw amino-acid sequence, 359 residues long: Protein Wnt-8a (359 aa).

The signal sequence occupies residues 1 to 25 (MNPCQIFASLVMSICCHILSSTAWS). A disulfide bridge connects residues Cys55 and Cys66. The N-linked (GlcNAc...) asparagine glycan is linked to Asn104. 10 disulfides stabilise this stretch: Cys105–Cys113, Cys115–Cys133, Cys181–Cys195, Cys183–Cys190, Cys260–Cys298, Cys276–Cys291, Cys295–Cys337, Cys313–Cys328, Cys315–Cys325, and Cys320–Cys321. Ser187 carries O-palmitoleoyl serine lipidation. 2 N-linked (GlcNAc...) asparagine glycosylation sites follow: Asn263 and Asn282. The N-linked (GlcNAc...) asparagine glycan is linked to Asn348.

It belongs to the Wnt family. Palmitoleoylation is required for efficient binding to frizzled receptors. Depalmitoleoylation leads to Wnt signaling pathway inhibition. Post-translationally, proteolytic processing by tiki1 and tiki2 promotes oxidation and formation of large disulfide-bond oligomers, leading to inactivation of wnt8. As to expression, expressed in the margin of the pregastrula embryo destined to be the future mesoderm.

Its subcellular location is the secreted. It localises to the extracellular space. It is found in the extracellular matrix. Functionally, ligand for members of the frizzled family of seven transmembrane receptors. Required for mesoderm and neural ectoderm patterning during gastrulation. Involved in axis formation during embryonic development, via activation of canonical Wnt/CTNNB1 signaling. May be involved in the specification of the spatial patterns of expression of Gsc and other regulatory genes leading to the establishment of the embryonic axis. This Danio rerio (Zebrafish) protein is Protein Wnt-8a (wnt8a).